A 93-amino-acid polypeptide reads, in one-letter code: Large ribosomal subunit protein eL42 (93 aa).

Cys-11, Cys-14, Cys-71, and Cys-74 together coordinate Zn(2+). The C4-type zinc-finger motif lies at 11–74 (CRYCGKHTLH…VNIRFRCTEC (64 aa)).

It belongs to the eukaryotic ribosomal protein eL42 family. As to quaternary structure, part of the 50S ribosomal subunit. Requires Zn(2+) as cofactor.

Functionally, binds to the 23S rRNA. This Archaeoglobus fulgidus (strain ATCC 49558 / DSM 4304 / JCM 9628 / NBRC 100126 / VC-16) protein is Large ribosomal subunit protein eL42.